Reading from the N-terminus, the 150-residue chain is Ribonuclease pancreatic delta-type (150 aa).

An N-terminal signal peptide occupies residues 1-25 (MGLEKSFILFSLLVLVLGWVQPSLG). Arg35 is a substrate binding site. His37 serves as the catalytic Proton acceptor. Intrachain disulfides connect Cys51-Cys110, Cys65-Cys121, Cys83-Cys136, and Cys90-Cys98. Substrate is bound by residues 66 to 70 (KRVNT), Lys91, and Arg111. Residue His145 is the Proton donor of the active site.

This sequence belongs to the pancreatic ribonuclease family. In terms of assembly, monomer.

It is found in the secreted. It catalyses the reaction an [RNA] containing cytidine + H2O = an [RNA]-3'-cytidine-3'-phosphate + a 5'-hydroxy-ribonucleotide-3'-[RNA].. The catalysed reaction is an [RNA] containing uridine + H2O = an [RNA]-3'-uridine-3'-phosphate + a 5'-hydroxy-ribonucleotide-3'-[RNA].. In terms of biological role, endonuclease that catalyzes the cleavage of RNA on the 3' side of pyrimidine nucleotides. Acts on single-stranded and double-stranded RNA. This chain is Ribonuclease pancreatic delta-type (Rnase1d), found in Rattus norvegicus (Rat).